Reading from the N-terminus, the 458-residue chain is MGKEKTHVNVVVIGHVDSGKSTTTGHLIYKCGGIDKRTIEKFEKEAAELGKGSFKYAWVLDKLKAERERGITIDIALWKFETPKYHVTVIDAPGHRDFIKNMITGTSQADCAILIIAGGTGEFEAGISKDGQTREHALLAYTLGVKQLIVAVNKMDSVKWDKNRFEEIIKETSNFVKKVGYNPKTVPFVPISGWNGDNMIEPSTNCPWYKGWEKETKSGKVTGKTLLEAIDAIEPPTRPTDKPLRLPLQDVYKIGGIGTVPVGRVETGIIKAGMVVTFAPAGVTTEVKSVEMHHEQLAEGVPGDNVGFNVKNVSVKEIRRGNVCGDSKNDPPKGCDSFNAQVIVLNHPGQISAGYSPVLDCHTAHIACKFDTLVEKIDRRTGKKLEENPKFVKSGDAAIVKMVPTKPMCVEAFTDYPPLGRFAVRDMRQTVAVGVIKSVEKSDKAGKVTKAAQKAAKK.

Gly2 is subject to N,N,N-trimethylglycine. Lys3 carries the post-translational modification N6,N6-dimethyllysine; alternate. N6-methyllysine; alternate is present on Lys3. Positions 5–240 (KTHVNVVVIG…DAIEPPTRPT (236 aa)) constitute a tr-type G domain. Residues 14–21 (GHVDSGKS) are G1. 14–21 (GHVDSGKS) serves as a coordination point for GTP. At Lys30 the chain carries N6-methyllysine. The segment at 70-74 (GITID) is G2. Residue Lys79 is modified to N6,N6,N6-trimethyllysine. The G3 stretch occupies residues 91 to 94 (DAPG). Residues 91–95 (DAPGH) and 153–156 (NKMD) each bind GTP. The segment at 153–156 (NKMD) is G4. The interval 192-194 (SGW) is G5. Lys316 carries the N6,N6-dimethyllysine; alternate modification. Residue Lys316 is modified to N6-methyllysine; alternate. Residue Lys390 is modified to N6-methyllysine.

This sequence belongs to the TRAFAC class translation factor GTPase superfamily. Classic translation factor GTPase family. EF-Tu/EF-1A subfamily.

It localises to the cytoplasm. This protein promotes the GTP-dependent binding of aminoacyl-tRNA to the A-site of ribosomes during protein biosynthesis. The chain is Elongation factor 1-alpha 1 (TEF1) from Candida albicans (strain SC5314 / ATCC MYA-2876) (Yeast).